The chain runs to 502 residues: Probable cytosol aminopeptidase (502 aa).

Residues lysine 267 and aspartate 272 each coordinate Mn(2+). Residue lysine 279 is part of the active site. Residues aspartate 290, aspartate 349, and glutamate 351 each contribute to the Mn(2+) site. Arginine 353 is an active-site residue.

This sequence belongs to the peptidase M17 family. The cofactor is Mn(2+).

It localises to the cytoplasm. It carries out the reaction Release of an N-terminal amino acid, Xaa-|-Yaa-, in which Xaa is preferably Leu, but may be other amino acids including Pro although not Arg or Lys, and Yaa may be Pro. Amino acid amides and methyl esters are also readily hydrolyzed, but rates on arylamides are exceedingly low.. It catalyses the reaction Release of an N-terminal amino acid, preferentially leucine, but not glutamic or aspartic acids.. Presumably involved in the processing and regular turnover of intracellular proteins. Catalyzes the removal of unsubstituted N-terminal amino acids from various peptides. The sequence is that of Probable cytosol aminopeptidase from Aeromonas salmonicida (strain A449).